A 388-amino-acid polypeptide reads, in one-letter code: Omega-hydroxy-beta-dihydromenaquinone-9 sulfotransferase Stf3 (388 aa).

This sequence belongs to the Stf3 family.

It catalyses the reaction omega-hydroxy-beta-dihydromenaquinone-9 + 3'-phosphoadenylyl sulfate = omega-sulfo-beta-dihydromenaquinone-9 + adenosine 3',5'-bisphosphate + H(+). Involved in the biosynthesis of sulfomenaquinone (SMK, initially named S881 on the basis of its mass), which is localized in the outer envelope of M.bovis and negatively regulates its virulence. Catalyzes the transfer of a sulfonate group from 3'-phosphoadenosine-5'-phosphosulfate (PAPS) to omega-hydroxy-beta-dihydromenaquinone-9, generating omega-sulfo-beta-dihydromenaquinone-9 (sulfomenaquinone). This is Omega-hydroxy-beta-dihydromenaquinone-9 sulfotransferase Stf3 from Mycobacterium bovis (strain ATCC BAA-935 / AF2122/97).